The chain runs to 398 residues: Phosphoglycerate kinase (398 aa).

Residues 21–23 (DFN), Arg36, 59–62 (HLGR), Arg119, and Arg157 contribute to the substrate site. ATP-binding positions include Lys208, Gly296, Glu327, and 354–357 (GGDS).

This sequence belongs to the phosphoglycerate kinase family. Monomer.

It localises to the cytoplasm. The catalysed reaction is (2R)-3-phosphoglycerate + ATP = (2R)-3-phospho-glyceroyl phosphate + ADP. It participates in carbohydrate degradation; glycolysis; pyruvate from D-glyceraldehyde 3-phosphate: step 2/5. The protein is Phosphoglycerate kinase of Streptococcus pyogenes serotype M3 (strain ATCC BAA-595 / MGAS315).